Reading from the N-terminus, the 327-residue chain is Taste receptor type 2 member 102 (327 aa).

Topologically, residues 1–7 are extracellular; it reads MEPVIYS. The chain crosses the membrane as a helical span at residues 8–28; it reads FATLLIHVEFIFGNLSNGFIV. Residues 29–46 are Cytoplasmic-facing; it reads LSNFWDWVIKRKLSTIDK. The helical transmembrane segment at 47–67 threads the bilayer; sequence ILLTLAISRITLIWEIYTWFT. Residues 68–87 are Extracellular-facing; the sequence is SVYGPSSFAIGMKLQILYFT. Residues 88–108 form a helical membrane-spanning segment; that stretch reads WILSSHFSLWFATALSIFYLL. At 109-124 the chain is on the cytoplasmic side; that stretch reads RIANCSWKIFLYLKWR. Residues 125–145 form a helical membrane-spanning segment; it reads LKQVIVGMLLASLVFLPGILT. Over 146–179 the chain is Extracellular; that stretch reads QRTLEERPYRYGGNTSEDSMETDFARFTELILFN. N-linked (GlcNAc...) asparagine glycosylation is found at Asn159 and Asn179. A helical membrane pass occupies residues 180-200; the sequence is LTIFSVIPFSLASISFLLLIF. Residues 201 to 229 lie on the Cytoplasmic side of the membrane; it reads SLWKHLRKMQLSSRGHGDPSTKAHTNALR. A helical transmembrane segment spans residues 230–250; the sequence is IMVSFLLLYSIYFLSLLLSWI. Over 251–260 the chain is Extracellular; the sequence is AQKHHSKLVD. The helical transmembrane segment at 261–281 threads the bilayer; it reads IIGIITGLMYPSAHSFILILG. Residues 282–327 are Cytoplasmic-facing; sequence NSKLMQTSLWILSHLRCRLKGENILNPSGNQVTSCYIFCIANKSVS.

The protein belongs to the G-protein coupled receptor T2R family.

It localises to the membrane. Functionally, putative taste receptor which may play a role in the perception of bitterness. The protein is Taste receptor type 2 member 102 of Rattus norvegicus (Rat).